We begin with the raw amino-acid sequence, 452 residues long: GTPase Der (452 aa).

2 EngA-type G domains span residues 9-170 (KIIA…PEED) and 185-362 (LQIV…KTWN). Residues 15–22 (GRPNVGKS), 62–66 (DTPGL), 124–127 (NKCE), 191–198 (GRPNAGKS), 238–242 (DTAGL), and 303–306 (NKWD) each bind GTP. In terms of domain architecture, KH-like spans 363–448 (KKITTSKLNE…PIRFNYIKTK (86 aa)).

Belongs to the TRAFAC class TrmE-Era-EngA-EngB-Septin-like GTPase superfamily. EngA (Der) GTPase family. Associates with the 50S ribosomal subunit.

Functionally, GTPase that plays an essential role in the late steps of ribosome biogenesis. This chain is GTPase Der, found in Rickettsia bellii (strain RML369-C).